The sequence spans 24 residues: Brevinin-1SPc (24 aa).

Cysteines 18 and 24 form a disulfide.

Expressed by the skin glands.

Its subcellular location is the secreted. In terms of biological role, antimicrobial peptide with activity against Gram-negative and Gram-positive bacteria and fungi. Also shows hemolytic activity. The polypeptide is Brevinin-1SPc (Lithobates septentrionalis (Mink frog)).